A 636-amino-acid chain; its full sequence is Probable potassium transport system protein Kup (636 aa).

Transmembrane regions (helical) follow at residues 23–43 (LVIG…LYSL), 63–83 (IISL…VVFV), 114–134 (VLMM…VITP), 150–170 (PQLS…LFLI), 182–202 (FGPV…YNLV), 217–237 (ISFL…VFLV), 260–280 (WFVL…AMLL), 298–318 (LLIP…QAVI), 350–370 (IYLP…VISF), 379–399 (AYGI…AVVM), 407–427 (PALV…FFAA), and 432–452 (VAEG…LLMT).

It belongs to the HAK/KUP transporter (TC 2.A.72) family.

The protein resides in the cell inner membrane. The enzyme catalyses K(+)(in) + H(+)(in) = K(+)(out) + H(+)(out). Functionally, transport of potassium into the cell. Likely operates as a K(+):H(+) symporter. The polypeptide is Probable potassium transport system protein Kup (Cupriavidus pinatubonensis (strain JMP 134 / LMG 1197) (Cupriavidus necator (strain JMP 134))).